A 651-amino-acid chain; its full sequence is Protein transport protein SEC9 (651 aa).

3 disordered regions span residues 1–22, 53–299, and 313–332; these read MGLKKFFKIKPPEEATPEQNKD, AEDK…QAPM, and RNSEVDLNEEPRTGEFDFEE. 2 positions are modified to phosphoserine: serine 79 and serine 92. The span at 86–112 shows a compositional bias: polar residues; it reads NEATAGSNRGSSGTQDLGNGAESNSMQ. Over residues 120 to 129 the composition is skewed to basic and acidic residues; that stretch reads DDYRYDDDPY. 2 stretches are compositionally biased toward polar residues: residues 157–218 and 244–284; these read GTSL…SLDQ and DSNT…ANPY. Phosphoserine is present on residues serine 186, serine 190, serine 213, serine 271, and serine 273. The span at 285–296 shows a compositional bias: low complexity; that stretch reads SSRSVRQPQSQQ. The segment covering 313–327 has biased composition (basic and acidic residues); it reads RNSEVDLNEEPRTGE. Serine 315 is modified (phosphoserine). Threonine 355 is subject to Phosphothreonine. Serine 359 carries the phosphoserine modification. 2 t-SNARE coiled-coil homology domains span residues 434 to 496 and 588 to 650; these read KFTK…VAEL and DEME…LAGI.

The protein belongs to the SNAP-25 family. In terms of assembly, interacts with SRO7 and SRO77.

Its function is as follows. Component of a SNARE complex that may be the effector of SEC4 function in exocytosis. This Saccharomyces cerevisiae (strain ATCC 204508 / S288c) (Baker's yeast) protein is Protein transport protein SEC9 (SEC9).